Reading from the N-terminus, the 445-residue chain is Putative ATP-dependent RNA helicase L538 (445 aa).

In terms of domain architecture, Helicase ATP-binding spans 14 to 151; sequence IEFMKNNRGV…AVLVNIVRGE (138 aa). 27–34 lines the ATP pocket; sequence HSTGAGKT. The DEAH box signature appears at 101–104; it reads DEAH. A Helicase C-terminal domain is found at 273-442; that stretch reads KIEDIMKYII…VIDASIENNY (170 aa).

This sequence belongs to the DEAD box helicase family. DEAH subfamily.

It localises to the virion. The enzyme catalyses ATP + H2O = ADP + phosphate + H(+). The protein is Putative ATP-dependent RNA helicase L538 of Acanthamoeba polyphaga mimivirus (APMV).